A 488-amino-acid polypeptide reads, in one-letter code: Probable glycine dehydrogenase (decarboxylating) subunit 2 (488 aa).

Residue K264 is modified to N6-(pyridoxal phosphate)lysine.

Belongs to the GcvP family. C-terminal subunit subfamily. The glycine cleavage system is composed of four proteins: P, T, L and H. In this organism, the P 'protein' is a heterodimer of two subunits. The cofactor is pyridoxal 5'-phosphate.

It carries out the reaction N(6)-[(R)-lipoyl]-L-lysyl-[glycine-cleavage complex H protein] + glycine + H(+) = N(6)-[(R)-S(8)-aminomethyldihydrolipoyl]-L-lysyl-[glycine-cleavage complex H protein] + CO2. Its function is as follows. The glycine cleavage system catalyzes the degradation of glycine. The P protein binds the alpha-amino group of glycine through its pyridoxal phosphate cofactor; CO(2) is released and the remaining methylamine moiety is then transferred to the lipoamide cofactor of the H protein. The polypeptide is Probable glycine dehydrogenase (decarboxylating) subunit 2 (Methylococcus capsulatus (strain ATCC 33009 / NCIMB 11132 / Bath)).